Consider the following 500-residue polypeptide: Cytochrome P450 11B2, mitochondrial (500 aa).

Residues 1–24 (MALRAKADVWLARPWQCLPRTRAL) constitute a mitochondrion transit peptide. Residue F381 coordinates 21-hydroxyprogesterone. Residue C447 coordinates heme.

The protein belongs to the cytochrome P450 family. Heme serves as cofactor. Adrenal gland.

The protein localises to the mitochondrion inner membrane. It catalyses the reaction a steroid + 2 reduced [adrenodoxin] + O2 + 2 H(+) = an 11beta-hydroxysteroid + 2 oxidized [adrenodoxin] + H2O. The catalysed reaction is 21-hydroxyprogesterone + 2 reduced [adrenodoxin] + O2 + 2 H(+) = corticosterone + 2 oxidized [adrenodoxin] + H2O. It carries out the reaction corticosterone + 2 reduced [adrenodoxin] + O2 + 2 H(+) = 18-hydroxycorticosterone + 2 oxidized [adrenodoxin] + H2O. The enzyme catalyses 18-hydroxycorticosterone + 2 reduced [adrenodoxin] + O2 + 2 H(+) = aldosterone + 2 oxidized [adrenodoxin] + 2 H2O. It catalyses the reaction 11-deoxycortisol + 2 reduced [adrenodoxin] + O2 + 2 H(+) = cortisol + 2 oxidized [adrenodoxin] + H2O. The catalysed reaction is 21-hydroxyprogesterone + 2 reduced [adrenodoxin] + O2 + 2 H(+) = 18-hydroxy-11-deoxycorticosterone + 2 oxidized [adrenodoxin] + H2O. It carries out the reaction cortisol + 2 reduced [adrenodoxin] + O2 + 2 H(+) = 18-hydroxycortisol + 2 oxidized [adrenodoxin] + H2O. The enzyme catalyses 18-hydroxycortisol + 2 reduced [adrenodoxin] + O2 + 2 H(+) = 18-oxocortisol + 2 oxidized [adrenodoxin] + 2 H2O. It participates in steroid biosynthesis. Functionally, a cytochrome P450 monooxygenase that catalyzes the biosynthesis of aldosterone, the main mineralocorticoid in the human body responsible for salt and water homeostasis, thus involved in blood pressure regulation, arterial hypertension, and the development of heart failure. Catalyzes three sequential oxidative reactions of 11-deoxycorticosterone (21-hydroxyprogesterone), namely 11-beta hydroxylation, followed by two successive oxidations at C18 yielding 18-hydroxy and then 18-oxo intermediates (that would not leave the enzyme active site during the consecutive hydroxylation reactions), ending with the formation of aldosterone. Can also produce 18-hydroxycortisol and 18-oxocortisol, derived from successive oxidations of cortisol at C18, normally found at very low levels, but significantly increased in primary aldosteronism, the most common form of secondary hypertension. Mechanistically, uses molecular oxygen inserting one oxygen atom into a substrate and reducing the second into a water molecule. Two electrons are provided by NADPH via a two-protein mitochondrial transfer system comprising flavoprotein FDXR (adrenodoxin/ferredoxin reductase) and nonheme iron-sulfur protein FDX1 or FDX2 (adrenodoxin/ferredoxin). Could also be involved in the androgen metabolic pathway. The protein is Cytochrome P450 11B2, mitochondrial (CYP11B2) of Mesocricetus auratus (Golden hamster).